A 261-amino-acid chain; its full sequence is ClpXP adapter protein SpxH (261 aa).

This sequence belongs to the SpxH family. In terms of assembly, interacts with Spx.

The protein resides in the cytoplasm. Adapter protein required for efficient degradation of Spx by ClpXP under non-stress conditions. Interaction with Spx stabilizes Spx and exposes the C-terminus of Spx for recognition and proteolysis by ClpXP. This Staphylococcus aureus protein is ClpXP adapter protein SpxH.